Consider the following 671-residue polypeptide: DNA ligase (671 aa).

Residues 32-36, 81-82, and glutamate 113 each bind NAD(+); these read DAEYD and SL. Catalysis depends on lysine 115, which acts as the N6-AMP-lysine intermediate. NAD(+) is bound by residues arginine 136, glutamate 173, lysine 290, and lysine 314. Residues cysteine 408, cysteine 411, cysteine 426, and cysteine 432 each coordinate Zn(2+). The region spanning 593 to 671 is the BRCT domain; that stretch reads EIDSPFAGKT…ETEMLRLLGS (79 aa).

This sequence belongs to the NAD-dependent DNA ligase family. LigA subfamily. Mg(2+) is required as a cofactor. The cofactor is Mn(2+).

The enzyme catalyses NAD(+) + (deoxyribonucleotide)n-3'-hydroxyl + 5'-phospho-(deoxyribonucleotide)m = (deoxyribonucleotide)n+m + AMP + beta-nicotinamide D-nucleotide.. Functionally, DNA ligase that catalyzes the formation of phosphodiester linkages between 5'-phosphoryl and 3'-hydroxyl groups in double-stranded DNA using NAD as a coenzyme and as the energy source for the reaction. It is essential for DNA replication and repair of damaged DNA. This Escherichia coli O81 (strain ED1a) protein is DNA ligase.